Reading from the N-terminus, the 872-residue chain is Alanine--tRNA ligase (872 aa).

Zn(2+) is bound by residues H567, H571, C669, and H673.

The protein belongs to the class-II aminoacyl-tRNA synthetase family. Requires Zn(2+) as cofactor.

It is found in the cytoplasm. It carries out the reaction tRNA(Ala) + L-alanine + ATP = L-alanyl-tRNA(Ala) + AMP + diphosphate. Catalyzes the attachment of alanine to tRNA(Ala) in a two-step reaction: alanine is first activated by ATP to form Ala-AMP and then transferred to the acceptor end of tRNA(Ala). Also edits incorrectly charged Ser-tRNA(Ala) and Gly-tRNA(Ala) via its editing domain. This chain is Alanine--tRNA ligase, found in Streptococcus pyogenes serotype M6 (strain ATCC BAA-946 / MGAS10394).